The primary structure comprises 1318 residues: Tetratricopeptide repeat protein 41 (1318 aa).

TPR repeat units follow at residues proline 401 to isoleucine 434, tryptophan 653 to glutamate 686, glycine 819 to serine 852, leucine 860 to phenylalanine 893, methionine 993 to alanine 1029, and serine 1047 to histidine 1084. The segment at lysine 1295–glutamate 1318 is disordered. The segment covering serine 1302–glutamate 1318 has biased composition (basic and acidic residues).

As to expression, highly expressed in lung and myeloid leukemia cell line (at protein level). Isoform 4: expressed in heart (at protein level).

Its subcellular location is the cytoplasm. The sequence is that of Tetratricopeptide repeat protein 41 from Mus musculus (Mouse).